We begin with the raw amino-acid sequence, 162 residues long: Regulatory protein RecX (162 aa).

The protein belongs to the RecX family.

It is found in the cytoplasm. Its function is as follows. Modulates RecA activity. The sequence is that of Regulatory protein RecX from Pectobacterium atrosepticum (strain SCRI 1043 / ATCC BAA-672) (Erwinia carotovora subsp. atroseptica).